Consider the following 189-residue polypeptide: NADH-quinone oxidoreductase subunit B (189 aa).

[4Fe-4S] cluster is bound by residues Cys-39, Cys-40, Cys-104, and Cys-135.

The protein belongs to the complex I 20 kDa subunit family. NDH-1 is composed of 14 different subunits. Subunits NuoB, C, D, E, F, and G constitute the peripheral sector of the complex. [4Fe-4S] cluster serves as cofactor.

It is found in the cell inner membrane. The enzyme catalyses a quinone + NADH + 5 H(+)(in) = a quinol + NAD(+) + 4 H(+)(out). In terms of biological role, NDH-1 shuttles electrons from NADH, via FMN and iron-sulfur (Fe-S) centers, to quinones in the respiratory chain. The immediate electron acceptor for the enzyme in this species is believed to be a menaquinone. Couples the redox reaction to proton translocation (for every two electrons transferred, four hydrogen ions are translocated across the cytoplasmic membrane), and thus conserves the redox energy in a proton gradient. This Chlorobium luteolum (strain DSM 273 / BCRC 81028 / 2530) (Pelodictyon luteolum) protein is NADH-quinone oxidoreductase subunit B.